The primary structure comprises 353 residues: Photosystem II D2 protein (353 aa).

At T2 the chain carries N-acetylthreonine. At T2 the chain carries Phosphothreonine. The helical transmembrane segment at 41–61 (CAYFALGGWFTGTTFVTSWYT) threads the bilayer. H118 contributes to the chlorophyll a binding site. Residues 125–141 (GFMLRQFELARSVQLRP) form a helical membrane-spanning segment. Q130 and N143 together coordinate pheophytin a. The chain crosses the membrane as a helical span at residues 153-166 (VFVSVFLIYPLGQS). Chlorophyll a is bound at residue H198. A helical transmembrane segment spans residues 208–228 (AALLCAIHGATVENTLFEDGD). 2 residues coordinate a plastoquinone: H215 and F262. H215 contributes to the Fe cation binding site. H269 serves as a coordination point for Fe cation. A helical transmembrane segment spans residues 279–295 (GLWMSALGVVGLALNLR).

The protein belongs to the reaction center PufL/M/PsbA/D family. As to quaternary structure, PSII is composed of 1 copy each of membrane proteins PsbA, PsbB, PsbC, PsbD, PsbE, PsbF, PsbH, PsbI, PsbJ, PsbK, PsbL, PsbM, PsbT, PsbX, PsbY, PsbZ, Psb30/Ycf12, at least 3 peripheral proteins of the oxygen-evolving complex and a large number of cofactors. It forms dimeric complexes. The D1/D2 heterodimer binds P680, chlorophylls that are the primary electron donor of PSII, and subsequent electron acceptors. It shares a non-heme iron and each subunit binds pheophytin, quinone, additional chlorophylls, carotenoids and lipids. There is also a Cl(-1) ion associated with D1 and D2, which is required for oxygen evolution. The PSII complex binds additional chlorophylls, carotenoids and specific lipids. serves as cofactor.

The protein resides in the plastid. Its subcellular location is the chloroplast thylakoid membrane. It carries out the reaction 2 a plastoquinone + 4 hnu + 2 H2O = 2 a plastoquinol + O2. Photosystem II (PSII) is a light-driven water:plastoquinone oxidoreductase that uses light energy to abstract electrons from H(2)O, generating O(2) and a proton gradient subsequently used for ATP formation. It consists of a core antenna complex that captures photons, and an electron transfer chain that converts photonic excitation into a charge separation. The D1/D2 (PsbA/PsbD) reaction center heterodimer binds P680, the primary electron donor of PSII as well as several subsequent electron acceptors. D2 is needed for assembly of a stable PSII complex. In Amborella trichopoda, this protein is Photosystem II D2 protein.